The chain runs to 98 residues: MKIAHPAFAGTLESSDLQVRIEPNNDGGIELVLDSTVEQRFGHAIRQVVLHTLDAMQVHDALVTIEDKGALDCVIRARVQAAVMRACDVQNIEWSQLS.

S14 carries the post-translational modification O-(phosphoribosyl dephospho-coenzyme A)serine.

Belongs to the CitD family. Oligomer with a subunit composition of (alpha,beta,gamma)6.

It is found in the cytoplasm. Its function is as follows. Covalent carrier of the coenzyme of citrate lyase. This chain is Citrate lyase acyl carrier protein, found in Vibrio cholerae serotype O1 (strain ATCC 39541 / Classical Ogawa 395 / O395).